A 181-amino-acid chain; its full sequence is NADH-quinone oxidoreductase subunit B (181 aa).

Positions 45, 46, 111, and 140 each coordinate [4Fe-4S] cluster.

It belongs to the complex I 20 kDa subunit family. As to quaternary structure, NDH-1 is composed of 15 different subunits. Subunits NuoB, C, D, E, F, and G constitute the peripheral sector of the complex. It depends on [4Fe-4S] cluster as a cofactor.

The protein localises to the cell membrane. It carries out the reaction a quinone + NADH + 5 H(+)(in) = a quinol + NAD(+) + 4 H(+)(out). NDH-1 shuttles electrons from NADH, via FMN and iron-sulfur (Fe-S) centers, to quinones in the respiratory chain. The immediate electron acceptor for the enzyme in this species is believed to be a menaquinone. Couples the redox reaction to proton translocation (for every two electrons transferred, four hydrogen ions are translocated across the cytoplasmic membrane), and thus conserves the redox energy in a proton gradient. This chain is NADH-quinone oxidoreductase subunit B, found in Deinococcus radiodurans (strain ATCC 13939 / DSM 20539 / JCM 16871 / CCUG 27074 / LMG 4051 / NBRC 15346 / NCIMB 9279 / VKM B-1422 / R1).